We begin with the raw amino-acid sequence, 206 residues long: Peptidyl-tRNA hydrolase (206 aa).

Tyr-14 is a tRNA binding site. Catalysis depends on His-19, which acts as the Proton acceptor. Positions 64, 66, and 112 each coordinate tRNA.

The protein belongs to the PTH family. Monomer.

It localises to the cytoplasm. The enzyme catalyses an N-acyl-L-alpha-aminoacyl-tRNA + H2O = an N-acyl-L-amino acid + a tRNA + H(+). In terms of biological role, hydrolyzes ribosome-free peptidyl-tRNAs (with 1 or more amino acids incorporated), which drop off the ribosome during protein synthesis, or as a result of ribosome stalling. Catalyzes the release of premature peptidyl moieties from peptidyl-tRNA molecules trapped in stalled 50S ribosomal subunits, and thus maintains levels of free tRNAs and 50S ribosomes. This is Peptidyl-tRNA hydrolase from Rhodopseudomonas palustris (strain ATCC BAA-98 / CGA009).